A 296-amino-acid polypeptide reads, in one-letter code: Probable endonuclease 4 (296 aa).

Residues His68, His109, Glu144, Asp178, His181, His213, Asp226, His228, and Glu258 each coordinate Zn(2+).

This sequence belongs to the AP endonuclease 2 family. The cofactor is Zn(2+).

The enzyme catalyses Endonucleolytic cleavage to 5'-phosphooligonucleotide end-products.. Functionally, endonuclease IV plays a role in DNA repair. It cleaves phosphodiester bonds at apurinic or apyrimidinic (AP) sites, generating a 3'-hydroxyl group and a 5'-terminal sugar phosphate. This Pediococcus pentosaceus (strain ATCC 25745 / CCUG 21536 / LMG 10740 / 183-1w) protein is Probable endonuclease 4.